The chain runs to 368 residues: DNA replication and repair protein RecF (368 aa).

30–37 is an ATP binding site; the sequence is GDNGAGKT.

The protein belongs to the RecF family.

The protein localises to the cytoplasm. Its function is as follows. The RecF protein is involved in DNA metabolism; it is required for DNA replication and normal SOS inducibility. RecF binds preferentially to single-stranded, linear DNA. It also seems to bind ATP. The sequence is that of DNA replication and repair protein RecF from Xanthomonas oryzae pv. oryzae (strain KACC10331 / KXO85).